Consider the following 225-residue polypeptide: Phosphatidylserine decarboxylase proenzyme (225 aa).

The active-site Schiff-base intermediate with substrate; via pyruvic acid is S195. S195 carries the post-translational modification Pyruvic acid (Ser); by autocatalysis.

It belongs to the phosphatidylserine decarboxylase family. PSD-A subfamily. As to quaternary structure, heterodimer of a large membrane-associated beta subunit and a small pyruvoyl-containing alpha subunit. Requires pyruvate as cofactor. Is synthesized initially as an inactive proenzyme. Formation of the active enzyme involves a self-maturation process in which the active site pyruvoyl group is generated from an internal serine residue via an autocatalytic post-translational modification. Two non-identical subunits are generated from the proenzyme in this reaction, and the pyruvate is formed at the N-terminus of the alpha chain, which is derived from the carboxyl end of the proenzyme. The post-translation cleavage follows an unusual pathway, termed non-hydrolytic serinolysis, in which the side chain hydroxyl group of the serine supplies its oxygen atom to form the C-terminus of the beta chain, while the remainder of the serine residue undergoes an oxidative deamination to produce ammonia and the pyruvoyl prosthetic group on the alpha chain.

It is found in the cell membrane. The enzyme catalyses a 1,2-diacyl-sn-glycero-3-phospho-L-serine + H(+) = a 1,2-diacyl-sn-glycero-3-phosphoethanolamine + CO2. The protein operates within phospholipid metabolism; phosphatidylethanolamine biosynthesis; phosphatidylethanolamine from CDP-diacylglycerol: step 2/2. Catalyzes the formation of phosphatidylethanolamine (PtdEtn) from phosphatidylserine (PtdSer). The sequence is that of Phosphatidylserine decarboxylase proenzyme from Gluconacetobacter diazotrophicus (strain ATCC 49037 / DSM 5601 / CCUG 37298 / CIP 103539 / LMG 7603 / PAl5).